A 190-amino-acid chain; its full sequence is Protein LZIC (190 aa).

Positions Ala-2–Ile-63 form a coiled coil.

The protein belongs to the CTNNBIP1 family. As to quaternary structure, does not interact with CTNNB1.

This chain is Protein LZIC (Lzic), found in Mus musculus (Mouse).